A 453-amino-acid chain; its full sequence is Ribosome biogenesis protein SSF2 (453 aa).

Basic residues predominate over residues Met-1–His-11. Disordered stretches follow at residues Met-1 to Ile-22, Lys-275 to Lys-327, and Ala-373 to Glu-453. The Brix domain maps to Met-26 to Ser-348. A compositionally biased stretch (basic and acidic residues) spans Ala-373 to Ala-398. Basic residues predominate over residues Lys-399–Ala-409. A compositionally biased stretch (acidic residues) spans Val-440–Glu-453.

In terms of assembly, part of a complex that includes BRX1, RPF1, RPF2 and SSF1 or SSF2.

It localises to the nucleus. The protein resides in the nucleolus. In terms of biological role, required for biogenesis of the 60S ribosomal subunit. This chain is Ribosome biogenesis protein SSF2 (SSF2), found in Saccharomyces cerevisiae (strain ATCC 204508 / S288c) (Baker's yeast).